A 263-amino-acid chain; its full sequence is Dermonecrotic toxin SpaSicTox-betaIF1 (263 aa).

Positions 15 and 17 each coordinate Mg(2+). The active-site Nucleophile is H31. Cystine bridges form between C35-C41 and C37-C179. Residue D75 participates in Mg(2+) binding.

This sequence belongs to the arthropod phospholipase D family. Class II subfamily. Requires Mg(2+) as cofactor. In terms of tissue distribution, expressed by the venom gland.

The protein localises to the secreted. It catalyses the reaction an N-(acyl)-sphingosylphosphocholine = an N-(acyl)-sphingosyl-1,3-cyclic phosphate + choline. It carries out the reaction an N-(acyl)-sphingosylphosphoethanolamine = an N-(acyl)-sphingosyl-1,3-cyclic phosphate + ethanolamine. The enzyme catalyses a 1-acyl-sn-glycero-3-phosphocholine = a 1-acyl-sn-glycero-2,3-cyclic phosphate + choline. The catalysed reaction is a 1-acyl-sn-glycero-3-phosphoethanolamine = a 1-acyl-sn-glycero-2,3-cyclic phosphate + ethanolamine. Functionally, dermonecrotic toxins cleave the phosphodiester linkage between the phosphate and headgroup of certain phospholipids (sphingolipid and lysolipid substrates), forming an alcohol (often choline) and a cyclic phosphate. This toxin acts on sphingomyelin (SM). It may also act on ceramide phosphoethanolamine (CPE), lysophosphatidylcholine (LPC) and lysophosphatidylethanolamine (LPE), but not on lysophosphatidylserine (LPS), and lysophosphatidylglycerol (LPG). It acts by transphosphatidylation, releasing exclusively cyclic phosphate products as second products. Induces dermonecrosis, hemolysis, increased vascular permeability, edema, inflammatory response, and platelet aggregation. The polypeptide is Dermonecrotic toxin SpaSicTox-betaIF1 (Sicarius patagonicus (Six-eyed sand spider)).